A 1781-amino-acid chain; its full sequence is BCL-6 corepressor-like protein 1 (1781 aa).

2 disordered regions span residues 64 to 136 (AVGS…SHSR) and 337 to 362 (ASTP…GPPS). 2 stretches are compositionally biased toward polar residues: residues 66 to 82 (GSGS…NTTE) and 127 to 136 (PDSTEASHSR). A Phosphoserine modification is found at serine 490. The span at 521–531 (SCTSPSSSTNS) shows a compositional bias: low complexity. Disordered stretches follow at residues 521–545 (SCTS…LADT), 561–616 (LLPA…EMPL), 733–777 (NRDP…STVK), 869–895 (PLGS…PEQD), and 933–960 (QPSS…TPKM). Polar residues predominate over residues 581 to 594 (TDQQTEGTSVTFSP). A phosphoserine mark is found at serine 593 and serine 607. Residue lysine 741 forms a Glycyl lysine isopeptide (Lys-Gly) (interchain with G-Cter in SUMO2) linkage. At serine 1024 the chain carries Phosphoserine. Residue lysine 1087 forms a Glycyl lysine isopeptide (Lys-Gly) (interchain with G-Cter in SUMO2) linkage. The interval 1100-1484 (WQPDEETESL…PTARQIPPEA (385 aa)) is disordered. The span at 1116-1127 (CNKEKEIEEEPR) shows a compositional bias: basic and acidic residues. The residue at position 1162 (serine 1162) is a Phosphoserine. Residues 1176–1185 (VRGKHKHRKP) show a composition bias toward basic residues. The segment covering 1195-1213 (KRTDGHEEGSLEKKAKNSF) has biased composition (basic and acidic residues). Over residues 1222–1234 (STRTRSQSGSICS) the composition is skewed to polar residues. Composition is skewed to basic and acidic residues over residues 1271 to 1284 (TQRD…HAQD) and 1297 to 1307 (RAREMPWRTEA). Over residues 1314–1324 (TNEEEEDDEEE) the composition is skewed to acidic residues. A compositionally biased stretch (basic residues) spans 1328-1339 (KRKKRRRQKSRK). Residues 1350 to 1362 (EEQRRKGRADSKA) are compositionally biased toward basic and acidic residues. Polar residues-rich tracts occupy residues 1381–1394 (LLLS…SDSP) and 1437–1449 (RWSQ…SKSP). 3 ANK repeats span residues 1493–1523 (AGET…DVNH), 1527–1556 (AGYT…NVNC), and 1560–1589 (DGTR…DPTL). Residues 1664–1781 (DDFMFELSDK…SEVEYQSWSS (118 aa)) are PCGF Ub-like fold domain (PUFD); required for the interaction with the KDM2B-SKP1 heterodimeric complex.

This sequence belongs to the BCOR family. As to quaternary structure, interacts with PCGF1, forming heterodimers. The PCGF1-BCORL1 heterodimeric complex interacts with the KDM2B-SKP1 heterodimeric complex to form a homotetrameric polycomb repression complex 1 (PRC1.1). Interacts with SKP1. Interacts with CTBP1, HDAC4, HDAC5 and HDAC7. As to expression, highly expressed in lung and testis.

The protein localises to the nucleus. Its function is as follows. Transcriptional corepressor. May specifically inhibit gene expression when recruited to promoter regions by sequence specific DNA-binding proteins such as BCL6. This repression may be mediated at least in part by histone deacetylase activities which can associate with this corepressor. The sequence is that of BCL-6 corepressor-like protein 1 (Bcorl1) from Mus musculus (Mouse).